A 177-amino-acid polypeptide reads, in one-letter code: Large ribosomal subunit protein uL6 (177 aa).

The protein belongs to the universal ribosomal protein uL6 family. As to quaternary structure, part of the 50S ribosomal subunit.

Functionally, this protein binds to the 23S rRNA, and is important in its secondary structure. It is located near the subunit interface in the base of the L7/L12 stalk, and near the tRNA binding site of the peptidyltransferase center. The protein is Large ribosomal subunit protein uL6 of Aliivibrio salmonicida (strain LFI1238) (Vibrio salmonicida (strain LFI1238)).